The primary structure comprises 475 residues: Siroheme synthase (475 aa).

The precorrin-2 dehydrogenase /sirohydrochlorin ferrochelatase stretch occupies residues 1 to 204 (MDYLPVFLNI…GRDQAAQDYL (204 aa)). NAD(+) contacts are provided by residues 22–23 (EI) and 43–44 (PA). A Phosphoserine modification is found at Ser129. The interval 218–475 (GEVYLVGAGP…MGTSSGPGYP (258 aa)) is uroporphyrinogen-III C-methyltransferase. Pro227 contributes to the S-adenosyl-L-methionine binding site. Residue Asp250 is the Proton acceptor of the active site. The active-site Proton donor is Lys272. S-adenosyl-L-methionine is bound by residues 303–305 (GGD), Ile308, 333–334 (TA), Met385, and Gly414.

The protein in the N-terminal section; belongs to the precorrin-2 dehydrogenase / sirohydrochlorin ferrochelatase family. In the C-terminal section; belongs to the precorrin methyltransferase family.

The catalysed reaction is uroporphyrinogen III + 2 S-adenosyl-L-methionine = precorrin-2 + 2 S-adenosyl-L-homocysteine + H(+). It carries out the reaction precorrin-2 + NAD(+) = sirohydrochlorin + NADH + 2 H(+). It catalyses the reaction siroheme + 2 H(+) = sirohydrochlorin + Fe(2+). It participates in cofactor biosynthesis; adenosylcobalamin biosynthesis; precorrin-2 from uroporphyrinogen III: step 1/1. The protein operates within cofactor biosynthesis; adenosylcobalamin biosynthesis; sirohydrochlorin from precorrin-2: step 1/1. Its pathway is porphyrin-containing compound metabolism; siroheme biosynthesis; precorrin-2 from uroporphyrinogen III: step 1/1. It functions in the pathway porphyrin-containing compound metabolism; siroheme biosynthesis; siroheme from sirohydrochlorin: step 1/1. It participates in porphyrin-containing compound metabolism; siroheme biosynthesis; sirohydrochlorin from precorrin-2: step 1/1. In terms of biological role, multifunctional enzyme that catalyzes the SAM-dependent methylations of uroporphyrinogen III at position C-2 and C-7 to form precorrin-2 via precorrin-1. Then it catalyzes the NAD-dependent ring dehydrogenation of precorrin-2 to yield sirohydrochlorin. Finally, it catalyzes the ferrochelation of sirohydrochlorin to yield siroheme. This Nitrosomonas europaea (strain ATCC 19718 / CIP 103999 / KCTC 2705 / NBRC 14298) protein is Siroheme synthase.